A 533-amino-acid polypeptide reads, in one-letter code: Dipeptide-binding protein (533 aa).

The N-terminal stretch at 1-24 (MRKILPLRAWLAAGLILGSPFSHA) is a signal peptide.

This sequence belongs to the bacterial solute-binding protein 5 family.

The protein localises to the periplasm. In terms of biological role, binds different dipeptides. Probably bind only L-amino acid containing dipeptides. The chain is Dipeptide-binding protein from Pseudomonas aeruginosa (strain ATCC 15692 / DSM 22644 / CIP 104116 / JCM 14847 / LMG 12228 / 1C / PRS 101 / PAO1).